Here is a 689-residue protein sequence, read N- to C-terminus: Glycine--tRNA ligase beta subunit (689 aa).

The protein belongs to the class-II aminoacyl-tRNA synthetase family. In terms of assembly, tetramer of two alpha and two beta subunits.

It is found in the cytoplasm. The catalysed reaction is tRNA(Gly) + glycine + ATP = glycyl-tRNA(Gly) + AMP + diphosphate. This chain is Glycine--tRNA ligase beta subunit, found in Salmonella heidelberg (strain SL476).